Reading from the N-terminus, the 230-residue chain is Large ribosomal subunit protein uL1 (230 aa).

It belongs to the universal ribosomal protein uL1 family. In terms of assembly, part of the 50S ribosomal subunit.

Its function is as follows. Binds directly to 23S rRNA. The L1 stalk is quite mobile in the ribosome, and is involved in E site tRNA release. Functionally, protein L1 is also a translational repressor protein, it controls the translation of the L11 operon by binding to its mRNA. The polypeptide is Large ribosomal subunit protein uL1 (Nitrobacter hamburgensis (strain DSM 10229 / NCIMB 13809 / X14)).